Reading from the N-terminus, the 194-residue chain is Peptidyl-tRNA hydrolase (194 aa).

Y17 contributes to the tRNA binding site. H22 functions as the Proton acceptor in the catalytic mechanism. TRNA-binding residues include Y68, N70, and N116.

This sequence belongs to the PTH family. In terms of assembly, monomer.

The protein resides in the cytoplasm. It carries out the reaction an N-acyl-L-alpha-aminoacyl-tRNA + H2O = an N-acyl-L-amino acid + a tRNA + H(+). Its function is as follows. Hydrolyzes ribosome-free peptidyl-tRNAs (with 1 or more amino acids incorporated), which drop off the ribosome during protein synthesis, or as a result of ribosome stalling. Functionally, catalyzes the release of premature peptidyl moieties from peptidyl-tRNA molecules trapped in stalled 50S ribosomal subunits, and thus maintains levels of free tRNAs and 50S ribosomes. This is Peptidyl-tRNA hydrolase from Pseudomonas fluorescens (strain ATCC BAA-477 / NRRL B-23932 / Pf-5).